Here is a 374-residue protein sequence, read N- to C-terminus: Translocating chain-associated membrane protein 1 (374 aa).

At 1 to 29 (MAIRKKSSKNPPVLSHEFVLQNHADIVSC) the chain is on the cytoplasmic side. Residues 30 to 50 (VAMVFLLGLMFEITAKVSIIF) form a helical membrane-spanning segment. Residues 51 to 81 (VTLQYNVTLPATEEQATESAFLYYYGIKDLA) lie on the Lumenal side of the membrane. The N-linked (GlcNAc...) asparagine glycan is linked to N56. Residues 82–102 (TVFFYMLVAIIIHAIIQEYVL) traverse the membrane as a helical segment. Over 103–121 (DKINRRMHFSKTKHSKFNE) the chain is Cytoplasmic. Residues 117-326 (SKFNESGQLS…NFQLRRWREH (210 aa)) enclose the TLC domain. A helical membrane pass occupies residues 122–142 (SGQLSAFYLFSCIWGTFILIS). Topologically, residues 143-159 (ENYISDPTILWRAYPHN) are lumenal. The chain crosses the membrane as a helical span at residues 160–180 (LMTFQMKFFYISQLAYWFHAF). Over 181–192 (PELYFQKTKKED) the chain is Cytoplasmic. The chain crosses the membrane as a helical span at residues 193–213 (IPRQLVYIGLYLFHIAGAYLL). Position 214 (N214) is a topological domain, lumenal. A helical transmembrane segment spans residues 215-235 (LNHLGLVLLVLHYFVEFLFHI). At 236 to 251 (SRLFYFSDEKYQKGFS) the chain is on the cytoplasmic side. A helical transmembrane segment spans residues 252–272 (LWAVLFVLGRLLTLILSVLTV). The Lumenal segment spans residues 273 to 297 (GFGLARAENQKLDFSTGNFNVLAVR). A helical membrane pass occupies residues 298 to 318 (IAVLASICITQAFMMWKFINF). At 319-374 (QLRRWREHSAFQAPAVKKKPPVTKGRSSRKGTENGVNGTVTSNGADSPRNRKEKSS) the chain is on the cytoplasmic side. The tract at residues 331–374 (APAVKKKPPVTKGRSSRKGTENGVNGTVTSNGADSPRNRKEKSS) is disordered. A compositionally biased stretch (basic residues) spans 334–347 (VKKKPPVTKGRSSR). A compositionally biased stretch (polar residues) spans 352–363 (NGVNGTVTSNGA). S365 is subject to Phosphoserine.

Belongs to the TRAM family. In terms of assembly, interacts with SEC61B. May interact with Derlin-1/DERL1. In terms of processing, N-glycosylated.

It is found in the endoplasmic reticulum membrane. Involved in the translocation of nascent protein chains into or through the endoplasmic reticulum (ER) membrane by facilitating the proper chain positioning at the SEC61 channel. Regulates the exposure of nascent secretory protein chain to the cytosol during translocation into the ER. May affect the phospholipid bilayer in the vicinity of the lateral gate of the SEC61 channel, thereby facilitating ER protein transport. Intimately associates with transmembrane (TM) domain of nascent membrane proteins during the entire integration process into the ER membrane. Associates with the second TM domain of G-protein-coupled receptor opsin/OPSD nascent chain in the ER membrane, which may facilitate its integration into the membrane. Under conditions of ER stress, participates in the disposal of misfolded ER membrane proteins during the unfolded protein response (UPR), an integrated stress response (ISR) pathway, by selectively retrotranslocating misfolded ER-membrane proteins from the ER into the cytosol where they are ubiquitinated and degraded by the proteasome. The polypeptide is Translocating chain-associated membrane protein 1 (TRAM1) (Bos taurus (Bovine)).